The sequence spans 486 residues: Cardiolipin synthase A (486 aa).

2 helical membrane-spanning segments follow: residues 3-23 (IFYNLIKCLIFSTYWLLIANI) and 38-58 (MSWLLTIYIIPFIGISIWFFF). PLD phosphodiesterase domains lie at 219-246 (VDVRQHRKIILIDNYIAYSGSMNLVDPY) and 399-426 (QKGLLHSKSILVDQQLSLIGTVNLDMRS). Residues H224, K226, D231, H404, K406, and D411 contribute to the active site.

Belongs to the phospholipase D family. Cardiolipin synthase subfamily. ClsA sub-subfamily.

It is found in the cell inner membrane. The enzyme catalyses 2 a 1,2-diacyl-sn-glycero-3-phospho-(1'-sn-glycerol) = a cardiolipin + glycerol. Functionally, catalyzes the reversible phosphatidyl group transfer from one phosphatidylglycerol molecule to another to form cardiolipin (CL) (diphosphatidylglycerol) and glycerol. The chain is Cardiolipin synthase A from Buchnera aphidicola subsp. Acyrthosiphon pisum (strain 5A).